The sequence spans 270 residues: NAD(P)H-hydrate epimerase (270 aa).

Positions 25–234 constitute a YjeF N-terminal domain; sequence FQQLMDLMQN…DLLAPEAIYQ (210 aa). 73–77 serves as a coordination point for (6S)-NADPHX; it reads DNGGQ. Positions 74 and 144 each coordinate K(+). Residues 148–154 and Glu-177 contribute to the (6S)-NADPHX site; that span reads GVGLYGH. A K(+)-binding site is contributed by Thr-180.

Belongs to the NnrE/AIBP family. K(+) is required as a cofactor.

The enzyme catalyses (6R)-NADHX = (6S)-NADHX. The catalysed reaction is (6R)-NADPHX = (6S)-NADPHX. Its function is as follows. Catalyzes the epimerization of the S- and R-forms of NAD(P)HX, a damaged form of NAD(P)H that is a result of enzymatic or heat-dependent hydration. This is a prerequisite for the S-specific NAD(P)H-hydrate dehydratase to allow the repair of both epimers of NAD(P)HX. This chain is NAD(P)H-hydrate epimerase, found in Legionella pneumophila subsp. pneumophila (strain Philadelphia 1 / ATCC 33152 / DSM 7513).